The sequence spans 306 residues: Probable GTP 3',8-cyclase (306 aa).

The Radical SAM core domain maps to 5-232 (RFGRPVTNLR…RRRKYFLPVD (228 aa)). Arg-14 lines the GTP pocket. The [4Fe-4S] cluster site is built by Cys-21 and Cys-25. Position 27 (Tyr-27) interacts with S-adenosyl-L-methionine. Cys-28 is a binding site for [4Fe-4S] cluster. Lys-61 is a GTP binding site. Gly-65 contacts S-adenosyl-L-methionine. Thr-90 lines the GTP pocket. Ser-114 serves as a coordination point for S-adenosyl-L-methionine. Position 150 (Lys-150) interacts with GTP. Met-189 serves as a coordination point for S-adenosyl-L-methionine. Residues Cys-250 and Cys-253 each coordinate [4Fe-4S] cluster. 255–257 (RLR) is a binding site for GTP. Cys-267 provides a ligand contact to [4Fe-4S] cluster.

This sequence belongs to the radical SAM superfamily. MoaA family. [4Fe-4S] cluster serves as cofactor.

It catalyses the reaction GTP + AH2 + S-adenosyl-L-methionine = (8S)-3',8-cyclo-7,8-dihydroguanosine 5'-triphosphate + 5'-deoxyadenosine + L-methionine + A + H(+). It functions in the pathway cofactor biosynthesis; molybdopterin biosynthesis. In terms of biological role, catalyzes the cyclization of GTP to (8S)-3',8-cyclo-7,8-dihydroguanosine 5'-triphosphate. This is Probable GTP 3',8-cyclase from Pyrococcus abyssi (strain GE5 / Orsay).